Consider the following 367-residue polypeptide: SRFRPGWLARSSMVAATLTGADSYWVGDHLNGLVPRSIATPEYLGIAAKLVPSVDANYEPWTMLGNLAYGRPKRLRLGICVTDAGRRNPAVTAQAAATLQLLTRGNAILGIGVGEREGNEPYGVEWTRPVARFEEALATIRALWNSNGELVSRESAYFPLQNAAFELPPYRGKWPEIWVAAHGPRMLRATGRYADAWVPIVLVRPGDYSTALEAVRTAASDAGRDPMSIIPSAVRGVITGRDRDDVEEALDSVVVKMTALGVPGTAWARHGVEHPMGADFAGVQDVIPQTMDEQTVLSYTAKVPPALMKEVVFSGTPEEVVDQVAQWRDHGLEYLLVINGSLVNPSLRKAVAASLPHAKVLRGLKKL.

It belongs to the mer family. Phthiodiolone/phenolphthiodiolone dimycocerosates ketoreductase subfamily.

Its function is as follows. Catalyzes the reduction of the keto moiety of phthiodiolone dimycocerosates (DIM B) and glycosylated phenolphthiodiolone dimycocerosates to form the intermediate compounds phthiotriol and glycosylated phenolphthiotriol dimycocerosates during phthiocerol dimycocerosates (DIM A) and glycosylated phenolphthiocerol dimycocerosates (PGL) biosynthesis. The polypeptide is Phthiodiolone/phenolphthiodiolone dimycocerosates ketoreductase (Mycobacterium kansasii).